The chain runs to 240 residues: Large ribosomal subunit protein bL25 (240 aa).

Residues 1–24 (MATVMEFKATARPKSGKGAARAER) form a disordered region.

This sequence belongs to the bacterial ribosomal protein bL25 family. CTC subfamily. Part of the 50S ribosomal subunit; part of the 5S rRNA/L5/L18/L25 subcomplex. Contacts the 5S rRNA. Binds to the 5S rRNA independently of L5 and L18.

Its function is as follows. This is one of the proteins that binds to the 5S RNA in the ribosome where it forms part of the central protuberance. The chain is Large ribosomal subunit protein bL25 from Rhodopseudomonas palustris (strain HaA2).